The sequence spans 332 residues: Anthranilate phosphoribosyltransferase (332 aa).

Residues Gly79, 82-83, Ser87, 89-92, 107-115, and Ser119 contribute to the 5-phospho-alpha-D-ribose 1-diphosphate site; these read GD, NIST, and KHGNRSVSS. Gly79 provides a ligand contact to anthranilate. Position 91 (Ser91) interacts with Mg(2+). Asn110 contacts anthranilate. Arg165 is a binding site for anthranilate. 2 residues coordinate Mg(2+): Asp223 and Glu224.

Belongs to the anthranilate phosphoribosyltransferase family. Homodimer. It depends on Mg(2+) as a cofactor.

The enzyme catalyses N-(5-phospho-beta-D-ribosyl)anthranilate + diphosphate = 5-phospho-alpha-D-ribose 1-diphosphate + anthranilate. Its pathway is amino-acid biosynthesis; L-tryptophan biosynthesis; L-tryptophan from chorismate: step 2/5. Functionally, catalyzes the transfer of the phosphoribosyl group of 5-phosphorylribose-1-pyrophosphate (PRPP) to anthranilate to yield N-(5'-phosphoribosyl)-anthranilate (PRA). The sequence is that of Anthranilate phosphoribosyltransferase from Erwinia tasmaniensis (strain DSM 17950 / CFBP 7177 / CIP 109463 / NCPPB 4357 / Et1/99).